Consider the following 234-residue polypeptide: MKILPIKIKGSIFTLLVLYLQNHPVELFKNNLRDKIKNFPTLFKNAPIAINVEKCSNEINWNNIKNAIISCGFNIIGVSGCKNGKLKNNIIKSGLPILSEGKEVFNFFNNINLDDKILSFEKKNYNKTPIFNSPIRSGQKIYANNSDLIITNNVNSGAEVIADGNIHIYGEVRGRVLAGAKGDNTCQIFCTKLFSELVAISGEYLLSGDFSEDTIGNSVKIYMKNKKLHIVKLN.

It belongs to the MinC family. As to quaternary structure, interacts with MinD and FtsZ.

Functionally, cell division inhibitor that blocks the formation of polar Z ring septums. Rapidly oscillates between the poles of the cell to destabilize FtsZ filaments that have formed before they mature into polar Z rings. Prevents FtsZ polymerization. The sequence is that of Probable septum site-determining protein MinC from Buchnera aphidicola subsp. Baizongia pistaciae (strain Bp).